We begin with the raw amino-acid sequence, 188 residues long: Pyridoxal 5'-phosphate synthase subunit PdxT (188 aa).

Glycine 46–serine 48 lines the L-glutamine pocket. Cysteine 78 (nucleophile) is an active-site residue. Residues arginine 105 and isoleucine 134–arginine 135 contribute to the L-glutamine site. Residues histidine 170 and glutamate 172 each act as charge relay system in the active site.

It belongs to the glutaminase PdxT/SNO family. As to quaternary structure, in the presence of PdxS, forms a dodecamer of heterodimers. Only shows activity in the heterodimer.

It carries out the reaction aldehydo-D-ribose 5-phosphate + D-glyceraldehyde 3-phosphate + L-glutamine = pyridoxal 5'-phosphate + L-glutamate + phosphate + 3 H2O + H(+). The enzyme catalyses L-glutamine + H2O = L-glutamate + NH4(+). The protein operates within cofactor biosynthesis; pyridoxal 5'-phosphate biosynthesis. Catalyzes the hydrolysis of glutamine to glutamate and ammonia as part of the biosynthesis of pyridoxal 5'-phosphate. The resulting ammonia molecule is channeled to the active site of PdxS. The polypeptide is Pyridoxal 5'-phosphate synthase subunit PdxT (Thermotoga petrophila (strain ATCC BAA-488 / DSM 13995 / JCM 10881 / RKU-1)).